The primary structure comprises 672 residues: MLRNGNKYLLMLVSIIMLTACISQSRTSFIPPQDRKSLLAEQPWPHNGFVAISWHNVEDEAADQRFMSVRTSALREQFAWLRENGYQPVSIAQIREAHRGGKPLPEKAVVLTFDDGYQSFYTRVFPILQAFQWPAVWAPVGSWVDTPADKQVKFGDELVDREYFATWQQVREVARSRLVELASHTWNSHYGIQANATGSLLPVYVNRAYFTDHARYETAAEYRERIRLDAVKMTEYLRTKVEVNPHVFIWPYGEANGIAIEELKKLGYDMFFTLESGLANASQLDSIPRVLIANNPSLKEFAQQIITVQEKSPQRIMHIDLDYVYDENLQQMDRNIDVLIQRVKDMQISTVYLQAFADPDGDGLVKEVWFPNRLLPMKADIFSRVAWQLRTRSGVNIYAWMPVLSWDLDPTLTRVKYLPTGEKKAQIHPEQYHRLSPFDDRVRAQVGMLYEDLAGHAAFDGILFHDDALLSDYEDASAPAITAYQQAGFSGSLSEIRQNPEQFKQWARFKSRALTDFTLELSARVKAIRGPHIKTARNIFALPVIQPESEAWFAQNYADFLKSYDWTAIMAMPYLEGVAEKSADQWLIQLTNQIKNIPQAKDKSILELQAQNWQKNGQHQAISSQQLAHWMSLLQLNGVKNYGYYPDNFLHNQPEIDLIRPEFSTAWYPKND.

The signal sequence occupies residues 1–20 (MLRNGNKYLLMLVSIIMLTA). C21 carries N-palmitoyl cysteine lipidation. C21 carries S-diacylglycerol cysteine lipidation. The NodB homology domain maps to 107-349 (KAVVLTFDDG…IQRVKDMQIS (243 aa)).

Belongs to the polysaccharide deacetylase family.

The protein localises to the cell outer membrane. Functionally, catalyzes the N-deacetylation of poly-beta-1,6-N-acetyl-D-glucosamine (PGA), a biofilm adhesin polysaccharide. N-deacetylation promotes PGA export through the PgaA porin. This Escherichia coli O157:H7 protein is Poly-beta-1,6-N-acetyl-D-glucosamine N-deacetylase (pgaB).